We begin with the raw amino-acid sequence, 410 residues long: MSEEKSGLVQRLMQGSLVTQIMVGLVAGIALAWLSKSHALAVGLLGELFVNALKAVAPLLVLVLVISSIANHQQGQKTNIRPIVMLYLLSTFFAAVVAVVASHLLPQNLTLQNASSQIVPPSGILEVLHGLLMSMVTNPIEAVMKANYIGILVWAIGLGFAFRHSSEGTRTFLNDASDAVTRLVRIVIRFAPVGIFGLVASILASTGFDALGQYASLLGLLLGCMLLMALVFNPLLVWWQIRRNPYPLVFTCLRESGVTAFFTRSSAANIPVNMALAKKLGLDEDTYTVSIPIGANISMAGASITITVLTLAAVHTLGIQIDVGSAILLSLVASVCACGASGVAGGSLLLIPVACNMFGIPNEIAMQVVAVGFIIGVLQDSAETALNSSADILFTAAACMAEDRRLEQNA.

The next 10 helical transmembrane spans lie at 15 to 35, 49 to 69, 82 to 102, 118 to 138, 142 to 162, 190 to 210, 217 to 237, 299 to 319, 331 to 351, and 358 to 378; these read GSLV…AWLS, FVNA…ISSI, PIVM…VVAS, IVPP…MVTN, AVMK…GFAF, FAPV…GFDA, LLGL…PLLV, MAGA…TLGI, LVAS…LLLI, and FGIP…IGVL.

The protein belongs to the dicarboxylate/amino acid:cation symporter (DAACS) (TC 2.A.23) family.

The protein resides in the cell inner membrane. The catalysed reaction is L-serine(in) + Na(+)(in) = L-serine(out) + Na(+)(out). It carries out the reaction L-threonine(in) + Na(+)(in) = L-threonine(out) + Na(+)(out). Involved in the import of serine and threonine into the cell, with the concomitant import of sodium (symport system). The sequence is that of Serine/threonine transporter SstT from Erwinia tasmaniensis (strain DSM 17950 / CFBP 7177 / CIP 109463 / NCPPB 4357 / Et1/99).